The sequence spans 241 residues: Mitochondrial inner membrane protease ATP23 (241 aa).

H141 is an a divalent metal cation binding site. Residue E142 is part of the active site. H145 contributes to the a divalent metal cation binding site.

This sequence belongs to the peptidase M76 family.

It localises to the mitochondrion inner membrane. Functionally, has a dual role in the assembly of mitochondrial ATPase. Acts as a protease that removes N-terminal residues of mitochondrial ATPase CF(0) subunit 6 at the intermembrane space side. Also involved in the correct assembly of the membrane-embedded ATPase CF(0) particle, probably mediating association of subunit 6 with the subunit 9 ring. The polypeptide is Mitochondrial inner membrane protease ATP23 (ATP23) (Lodderomyces elongisporus (strain ATCC 11503 / CBS 2605 / JCM 1781 / NBRC 1676 / NRRL YB-4239) (Yeast)).